The chain runs to 91 residues: Cell division protein FtsB (91 aa).

Residues 1-3 are Cytoplasmic-facing; sequence MRW. Residues 4 to 21 traverse the membrane as a helical segment; it reads PVIILAVLVVVLQYPLWL. Topologically, residues 22-91 are periplasmic; it reads GKGGWLRVWE…EIFVQVPQKH (70 aa). A coiled-coil region spans residues 28 to 72; that stretch reads RVWEVDRKLHEQREENTRLEERNAGLDAEVRDLKSGNEAIEERAR.

This sequence belongs to the FtsB family. In terms of assembly, part of a complex composed of FtsB, FtsL and FtsQ.

The protein localises to the cell inner membrane. In terms of biological role, essential cell division protein. May link together the upstream cell division proteins, which are predominantly cytoplasmic, with the downstream cell division proteins, which are predominantly periplasmic. This chain is Cell division protein FtsB, found in Azoarcus sp. (strain BH72).